Here is a 440-residue protein sequence, read N- to C-terminus: D-serine dehydratase (440 aa).

Position 116 is an N6-(pyridoxal phosphate)lysine (Lys-116).

Belongs to the serine/threonine dehydratase family. DsdA subfamily. In terms of assembly, monomer. Pyridoxal 5'-phosphate is required as a cofactor.

It catalyses the reaction D-serine = pyruvate + NH4(+). The protein is D-serine dehydratase of Salmonella paratyphi A (strain ATCC 9150 / SARB42).